The following is a 59-amino-acid chain: MAKVVITLVKSPIGYEKSQRATVVALGFKKGKRVVEKEATPQINGMINKISHLLKVEYK.

It belongs to the universal ribosomal protein uL30 family. In terms of assembly, part of the 50S ribosomal subunit.

This is Large ribosomal subunit protein uL30 from Brachyspira hyodysenteriae (strain ATCC 49526 / WA1).